The following is a 500-amino-acid chain: Beta-glucosidase 2 (500 aa).

The signal sequence occupies residues 1-24 (MGAAAAAGFFFVLLFLSVQGGAVG). Gln44 and His144 together coordinate a beta-D-glucoside. Glu190 functions as the Proton donor in the catalytic mechanism. Cys209 and Cys218 form a disulfide bridge. An N-linked (GlcNAc...) asparagine glycan is attached at Asn222. The a beta-D-glucoside site is built by Tyr334 and Glu403. Catalysis depends on Glu403, which acts as the Nucleophile. N-linked (GlcNAc...) asparagine glycosylation occurs at Asn410. Trp445 contributes to the a beta-D-glucoside binding site.

Belongs to the glycosyl hydrolase 1 family.

The catalysed reaction is Hydrolysis of terminal, non-reducing beta-D-glucosyl residues with release of beta-D-glucose.. The polypeptide is Beta-glucosidase 2 (BGLU2) (Oryza sativa subsp. japonica (Rice)).